The primary structure comprises 1038 residues: Bone morphogenetic protein receptor type-2 (1038 aa).

The N-terminal stretch at 1-26 (MTSSLQRPWRVPWLPWTILLVSTAAA) is a signal peptide. At 27–150 (SQNQERLCAF…PPHSFNRDET (124 aa)) the chain is on the extracellular side. 5 disulfides stabilise this stretch: cysteine 34–cysteine 66, cysteine 60–cysteine 84, cysteine 94–cysteine 117, cysteine 99–cysteine 116, and cysteine 118–cysteine 123. A glycan (N-linked (GlcNAc...) asparagine) is linked at asparagine 55. Asparagine 110 carries an N-linked (GlcNAc...) asparagine glycan. Asparagine 126 carries an N-linked (GlcNAc...) asparagine glycan. The helical transmembrane segment at 151-171 (IIIALASVSVLAVLIVALCFG) threads the bilayer. Topologically, residues 172-1038 (YRMLTGDRKQ…VSKDIGMNCL (867 aa)) are cytoplasmic. Residues 203–504 (LKLLELIGRG…QCAEERMAEL (302 aa)) form the Protein kinase domain. ATP contacts are provided by residues 209–217 (IGRGRYGAV), lysine 230, and 280–282 (EYY). Aspartate 333 acts as the Proton acceptor in catalysis. ATP is bound by residues 337-338 (RN) and aspartate 351. The residue at position 379 (threonine 379) is a Phosphothreonine. Residue serine 586 is modified to Phosphoserine. Residues 593–626 (QAQARIPSPETSVTSLSTNTTTTNTTGLTPSTGM) form a disordered region. Positions 603–626 (TSVTSLSTNTTTTNTTGLTPSTGM) are enriched in low complexity. A phosphoserine mark is found at serine 680 and serine 681. Disordered regions lie at residues 746-770 (PKQQNLPKRPTSLPLNTKNSTKEPR) and 872-972 (RREQ…EKIK). The span at 872–896 (RREQQAGHDEGVLDRLVDRRERPLE) shows a compositional bias: basic and acidic residues. Residues 937 to 964 (RPNSLDLSATNVLDGSSIQIGESTQDGK) are compositionally biased toward polar residues.

It belongs to the protein kinase superfamily. TKL Ser/Thr protein kinase family. TGFB receptor subfamily. In terms of assembly, interacts with GDF5. Interacts with BMP4. Interacts with SCUBE3. Interacts with TSC22D1/TSC-22. Interacts with activin A/INHBA. Mg(2+) serves as cofactor. Requires Mn(2+) as cofactor. Highly expressed in heart and liver.

It localises to the cell membrane. The catalysed reaction is L-threonyl-[receptor-protein] + ATP = O-phospho-L-threonyl-[receptor-protein] + ADP + H(+). The enzyme catalyses L-seryl-[receptor-protein] + ATP = O-phospho-L-seryl-[receptor-protein] + ADP + H(+). In terms of biological role, on ligand binding, forms a receptor complex consisting of two type II and two type I transmembrane serine/threonine kinases. Type II receptors phosphorylate and activate type I receptors which autophosphorylate, then bind and activate SMAD transcriptional regulators. Can also mediate signaling through the activation of the p38MAPK cascade. Binds to BMP7, BMP2 and, less efficiently, BMP4. Binding is weak but enhanced by the presence of type I receptors for BMPs. Mediates induction of adipogenesis by GDF6. Promotes signaling also by binding to activin A/INHBA. This is Bone morphogenetic protein receptor type-2 (BMPR2) from Homo sapiens (Human).